The primary structure comprises 741 residues: Catalase-peroxidase (741 aa).

The N-terminal stretch at 1–21 (MRNFRRFTIALLVLFLGPIGA) is a signal peptide. Residues 109–231 (WHSAGTYRIS…LAAVQMGLIY (123 aa)) constitute a cross-link (tryptophyl-tyrosyl-methioninium (Trp-Tyr) (with M-257)). The active-site Proton acceptor is His110. A cross-link (tryptophyl-tyrosyl-methioninium (Tyr-Met) (with W-109)) is located at residues 231 to 257 (YVNPEGPNGNPDPLAAAKDIRETFGRM). His272 serves as a coordination point for heme b.

It belongs to the peroxidase family. Peroxidase/catalase subfamily. As to quaternary structure, homodimer or homotetramer. It depends on heme b as a cofactor. Formation of the three residue Trp-Tyr-Met cross-link is important for the catalase, but not the peroxidase activity of the enzyme.

The enzyme catalyses H2O2 + AH2 = A + 2 H2O. The catalysed reaction is 2 H2O2 = O2 + 2 H2O. Bifunctional enzyme with both catalase and broad-spectrum peroxidase activity. The chain is Catalase-peroxidase from Leptospira biflexa serovar Patoc (strain Patoc 1 / Ames).